Consider the following 1013-residue polypeptide: Probable outer membrane protein PmpG (1013 aa).

Residues 1–27 (MQTSFHKFFLSMILAYSCCSLSGGGYA) form the signal peptide. The Autotransporter domain maps to 733 to 1013 (GRSYCRGLWV…GLSAGSKVRF (281 aa)).

This sequence belongs to the PMP outer membrane protein family.

The protein localises to the secreted. Its subcellular location is the cell wall. The protein resides in the cell outer membrane. The protein is Probable outer membrane protein PmpG (pmpG) of Chlamydia trachomatis serovar D (strain ATCC VR-885 / DSM 19411 / UW-3/Cx).